The following is a 403-amino-acid chain: Probable tRNA sulfurtransferase (403 aa).

Residues 60–165 form the THUMP domain; it reads KLAEERLKPI…KEGVFLSCRT (106 aa). Residues 183 to 184, 208 to 209, R265, G287, and Q296 contribute to the ATP site; these read ML and HF.

The protein belongs to the ThiI family.

The protein localises to the cytoplasm. The catalysed reaction is [ThiI sulfur-carrier protein]-S-sulfanyl-L-cysteine + a uridine in tRNA + 2 reduced [2Fe-2S]-[ferredoxin] + ATP + H(+) = [ThiI sulfur-carrier protein]-L-cysteine + a 4-thiouridine in tRNA + 2 oxidized [2Fe-2S]-[ferredoxin] + AMP + diphosphate. It carries out the reaction [ThiS sulfur-carrier protein]-C-terminal Gly-Gly-AMP + S-sulfanyl-L-cysteinyl-[cysteine desulfurase] + AH2 = [ThiS sulfur-carrier protein]-C-terminal-Gly-aminoethanethioate + L-cysteinyl-[cysteine desulfurase] + A + AMP + 2 H(+). Its pathway is cofactor biosynthesis; thiamine diphosphate biosynthesis. Its function is as follows. Catalyzes the ATP-dependent transfer of a sulfur to tRNA to produce 4-thiouridine in position 8 of tRNAs, which functions as a near-UV photosensor. Also catalyzes the transfer of sulfur to the sulfur carrier protein ThiS, forming ThiS-thiocarboxylate. This is a step in the synthesis of thiazole, in the thiamine biosynthesis pathway. The sulfur is donated as persulfide by IscS. The chain is Probable tRNA sulfurtransferase from Listeria welshimeri serovar 6b (strain ATCC 35897 / DSM 20650 / CCUG 15529 / CIP 8149 / NCTC 11857 / SLCC 5334 / V8).